A 229-amino-acid polypeptide reads, in one-letter code: MAKKSKQLRAALEKIDSTKAYSVEEAVALAKETNFAKFDATVEVAYNLNIDVKKADQQIRGAMVLPNGTGKTSRVLVFARGAKAEEAKAAGADFVGEDDLVAKINDGWLDFDVVIATPDMMALVGRLGRVLGPRNLMPNPKTGTVTMDVAKAVEESKGGKITYRADRAGNVQAIIGKVSFEAEKLVENFKAFNETIQKAKPATAKGTYVTNLTITTTQGVGIKVDVNSL.

This sequence belongs to the universal ribosomal protein uL1 family. In terms of assembly, part of the 50S ribosomal subunit.

In terms of biological role, binds directly to 23S rRNA. The L1 stalk is quite mobile in the ribosome, and is involved in E site tRNA release. Its function is as follows. Protein L1 is also a translational repressor protein, it controls the translation of the L11 operon by binding to its mRNA. The protein is Large ribosomal subunit protein uL1 of Streptococcus pneumoniae serotype 2 (strain D39 / NCTC 7466).